A 217-amino-acid chain; its full sequence is Adenylate kinase (217 aa).

ATP is bound at residue G10 to T15. Positions S30 to V59 are NMP. Residues T31, R36, A57–V59, G85–R88, and Q92 contribute to the AMP site. The tract at residues G126–D163 is LID. Residue R127 coordinates ATP. Zn(2+)-binding residues include C130, C133, C150, and C153. R160 and R171 together coordinate AMP. E199 is a binding site for ATP.

The protein belongs to the adenylate kinase family. As to quaternary structure, monomer.

It localises to the cytoplasm. The enzyme catalyses AMP + ATP = 2 ADP. The protein operates within purine metabolism; AMP biosynthesis via salvage pathway; AMP from ADP: step 1/1. In terms of biological role, catalyzes the reversible transfer of the terminal phosphate group between ATP and AMP. Plays an important role in cellular energy homeostasis and in adenine nucleotide metabolism. The polypeptide is Adenylate kinase (Geobacter sulfurreducens (strain ATCC 51573 / DSM 12127 / PCA)).